A 98-amino-acid chain; its full sequence is ESAT-6-like protein EsxJ (98 aa).

It belongs to the WXG100 family. CFP-10 subfamily.

It localises to the secreted. This chain is ESAT-6-like protein EsxJ, found in Mycobacterium bovis (strain ATCC BAA-935 / AF2122/97).